A 434-amino-acid polypeptide reads, in one-letter code: Aspartate--tRNA(Asp/Asn) ligase (434 aa).

Residue Glu167 participates in L-aspartate binding. An aspartate region spans residues 189–192 (QLFK). Arg211 is an L-aspartate binding site. ATP is bound by residues 211–213 (RAE), 219–221 (RHL), and Glu357. Mg(2+) is bound by residues Glu357 and Ser360. L-aspartate contacts are provided by Ser360 and Arg364. Position 405 to 408 (405 to 408 (GGER)) interacts with ATP.

Belongs to the class-II aminoacyl-tRNA synthetase family. Type 2 subfamily. As to quaternary structure, homodimer. It depends on Mg(2+) as a cofactor.

The protein resides in the cytoplasm. It catalyses the reaction tRNA(Asx) + L-aspartate + ATP = L-aspartyl-tRNA(Asx) + AMP + diphosphate. Aspartyl-tRNA synthetase with relaxed tRNA specificity since it is able to aspartylate not only its cognate tRNA(Asp) but also tRNA(Asn). Reaction proceeds in two steps: L-aspartate is first activated by ATP to form Asp-AMP and then transferred to the acceptor end of tRNA(Asp/Asn). This chain is Aspartate--tRNA(Asp/Asn) ligase, found in Haloquadratum walsbyi (strain DSM 16790 / HBSQ001).